The primary structure comprises 487 residues: Probable cytosol aminopeptidase (487 aa).

2 residues coordinate Mn(2+): lysine 253 and aspartate 258. Residue lysine 265 is part of the active site. Mn(2+) contacts are provided by aspartate 277, aspartate 337, and glutamate 339. Residue arginine 341 is part of the active site.

This sequence belongs to the peptidase M17 family. Requires Mn(2+) as cofactor.

The protein localises to the cytoplasm. It carries out the reaction Release of an N-terminal amino acid, Xaa-|-Yaa-, in which Xaa is preferably Leu, but may be other amino acids including Pro although not Arg or Lys, and Yaa may be Pro. Amino acid amides and methyl esters are also readily hydrolyzed, but rates on arylamides are exceedingly low.. The catalysed reaction is Release of an N-terminal amino acid, preferentially leucine, but not glutamic or aspartic acids.. Functionally, presumably involved in the processing and regular turnover of intracellular proteins. Catalyzes the removal of unsubstituted N-terminal amino acids from various peptides. This chain is Probable cytosol aminopeptidase, found in Parasynechococcus marenigrum (strain WH8102).